Reading from the N-terminus, the 698-residue chain is Serine/threonine-protein kinase Nek8 (698 aa).

Residues 4-258 enclose the Protein kinase domain; it reads YERIRVVGRG…LSHIMAQPLC (255 aa). ATP-binding positions include 10-18 and Lys33; that span reads VGRGAFGIV. The Proton acceptor role is filled by Asp128. Thr162 carries the post-translational modification Phosphothreonine; by autocatalysis. The segment at 281–307 is disordered; sequence LTPGTPMAPGSTGSRATSARCRGVPRG. RCC1 repeat units follow at residues 415–466, 467–518, 520–571, 585–636, and 638–689; these read RGII…ALSA, DGEL…ILTS, GRVL…TLLC, SGAC…AIGA, and GEVY…LAVR.

This sequence belongs to the protein kinase superfamily. NEK Ser/Thr protein kinase family. NIMA subfamily. In terms of assembly, interacts with PKD2; may regulate PKD2 targeting to the cilium. Interacts with ANKS6. Component of a complex containing at least ANKS6, INVS, NEK8 and NPHP3. ANKS6 may organize complex assembly by linking INVS and NPHP3 to NEK8 and INVS may target it to the proximal ciliary axoneme. Interacts with ANKS3. Requires Mg(2+) as cofactor.

The protein localises to the cytoplasm. It localises to the cytoskeleton. It is found in the cell projection. The protein resides in the cilium. Its subcellular location is the cilium axoneme. The protein localises to the microtubule organizing center. It localises to the centrosome. It catalyses the reaction L-seryl-[protein] + ATP = O-phospho-L-seryl-[protein] + ADP + H(+). It carries out the reaction L-threonyl-[protein] + ATP = O-phospho-L-threonyl-[protein] + ADP + H(+). Functionally, required for renal tubular integrity. May regulate local cytoskeletal structure in kidney tubule epithelial cells. May regulate ciliary biogenesis through targeting of proteins to the cilia. Plays a role in organogenesis and is involved in the regulation of the Hippo signaling pathway. In Rattus norvegicus (Rat), this protein is Serine/threonine-protein kinase Nek8 (Nek8).